The primary structure comprises 86 residues: MRKDIHPDYRPVVFLDTTTGYQFLSGSTKASKETVEFEGETYPLIRVEISSDSHPFYTGRQKFTQADGRVDRFNKKYGLKDANAAK.

The protein belongs to the bacterial ribosomal protein bL31 family. Type B subfamily. As to quaternary structure, part of the 50S ribosomal subunit.

This is Large ribosomal subunit protein bL31B from Streptococcus pyogenes serotype M1.